The chain runs to 290 residues: Pyridoxal kinase PdxY (290 aa).

Residues Ser-12 and 47-48 (TQ) each bind substrate. ATP is bound by residues Asp-114, Glu-151, Lys-184, and 211–214 (RPLL). Residue Asp-225 participates in substrate binding.

Belongs to the pyridoxine kinase family. PdxY subfamily. Homodimer. Mg(2+) is required as a cofactor.

The enzyme catalyses pyridoxal + ATP = pyridoxal 5'-phosphate + ADP + H(+). It participates in cofactor metabolism; pyridoxal 5'-phosphate salvage; pyridoxal 5'-phosphate from pyridoxal: step 1/1. Pyridoxal kinase involved in the salvage pathway of pyridoxal 5'-phosphate (PLP). Catalyzes the phosphorylation of pyridoxal to PLP. The chain is Pyridoxal kinase PdxY from Pseudomonas fluorescens (strain Pf0-1).